A 451-amino-acid chain; its full sequence is Speckle-type POZ protein homolog (451 aa).

Positions 51-75 (EVVSSGSGNSAHGRSISPSPSSASH) are disordered. Residues 60 to 75 (SAHGRSISPSPSSASH) show a composition bias toward low complexity. The 131-residue stretch at 95-225 (KFNYMWTINN…GDRLSIFCEV (131 aa)) folds into the MATH domain. The BTB domain maps to 265 to 338 (SDFTLVCKSD…MYTGQTKYIE (74 aa)).

This sequence belongs to the Tdpoz family.

The protein resides in the nucleus. It is found in the nucleus speckle. The protein operates within protein modification; protein ubiquitination. Mediates ubiquitination and proteasomal degradation of target proteins, most likely in complex with cul-3. May promote the degradation of bromodomain-containing proteins such as bet-1. This Caenorhabditis elegans protein is Speckle-type POZ protein homolog.